A 336-amino-acid chain; its full sequence is Glyceraldehyde-3-phosphate dehydrogenase 1 (336 aa).

NAD(+) is bound by residues 12 to 13 (RI), Asp-34, and Arg-79. D-glyceraldehyde 3-phosphate contacts are provided by residues 149–151 (SCT), Thr-180, 209–210 (TG), and Arg-232. Cys-150 (nucleophile) is an active-site residue. Asn-314 serves as a coordination point for NAD(+).

The protein belongs to the glyceraldehyde-3-phosphate dehydrogenase family. As to quaternary structure, homotetramer.

The protein localises to the cytoplasm. The catalysed reaction is D-glyceraldehyde 3-phosphate + phosphate + NAD(+) = (2R)-3-phospho-glyceroyl phosphate + NADH + H(+). It functions in the pathway carbohydrate degradation; glycolysis; pyruvate from D-glyceraldehyde 3-phosphate: step 1/5. Its activity is regulated as follows. Inhibited by koningic acid through the interaction of cysteine residues with koningic acid even at very low concentrations. The protein is Glyceraldehyde-3-phosphate dehydrogenase 1 (gpd1) of Trichoderma koningii (Hypocrea koningii).